The following is a 257-amino-acid chain: Acyl-[acyl-carrier-protein]--UDP-N-acetylglucosamine O-acyltransferase (257 aa).

Belongs to the transferase hexapeptide repeat family. LpxA subfamily. Homotrimer.

Its subcellular location is the cytoplasm. The enzyme catalyses a (3R)-hydroxyacyl-[ACP] + UDP-N-acetyl-alpha-D-glucosamine = a UDP-3-O-[(3R)-3-hydroxyacyl]-N-acetyl-alpha-D-glucosamine + holo-[ACP]. It participates in glycolipid biosynthesis; lipid IV(A) biosynthesis; lipid IV(A) from (3R)-3-hydroxytetradecanoyl-[acyl-carrier-protein] and UDP-N-acetyl-alpha-D-glucosamine: step 1/6. Functionally, involved in the biosynthesis of lipid A, a phosphorylated glycolipid that anchors the lipopolysaccharide to the outer membrane of the cell. The protein is Acyl-[acyl-carrier-protein]--UDP-N-acetylglucosamine O-acyltransferase of Fusobacterium nucleatum subsp. nucleatum (strain ATCC 25586 / DSM 15643 / BCRC 10681 / CIP 101130 / JCM 8532 / KCTC 2640 / LMG 13131 / VPI 4355).